We begin with the raw amino-acid sequence, 377 residues long: Glutamate 5-kinase (377 aa).

Residue K18 participates in ATP binding. S59, D146, and N158 together coordinate substrate. ATP is bound by residues 178–179 and 222–228; these read SD and TGGMATK. Residues 286–363 enclose the PUA domain; it reads QGWVTVDAGA…DAIEAELGFT (78 aa).

The protein belongs to the glutamate 5-kinase family.

It is found in the cytoplasm. The enzyme catalyses L-glutamate + ATP = L-glutamyl 5-phosphate + ADP. It participates in amino-acid biosynthesis; L-proline biosynthesis; L-glutamate 5-semialdehyde from L-glutamate: step 1/2. Functionally, catalyzes the transfer of a phosphate group to glutamate to form L-glutamate 5-phosphate. This is Glutamate 5-kinase from Caulobacter vibrioides (strain ATCC 19089 / CIP 103742 / CB 15) (Caulobacter crescentus).